Consider the following 214-residue polypeptide: Scytalone dehydratase-like protein mdpB (214 aa).

Substrate contacts are provided by Tyr40 and Tyr60. Active-site residues include His95 and His120.

This sequence belongs to the scytalone dehydratase family.

Its pathway is secondary metabolite biosynthesis. Its function is as follows. Scytalone dehydratase-like protein; part of the gene cluster that mediates the biosynthesis of monodictyphenone, a prenyl xanthone derivative. The pathway begins with the synthesis of atrochrysone thioester by the polyketide synthase (PKS) mdpG. The atrochrysone carboxyl ACP thioesterase mdpF then breaks the thioester bond and releases the atrochrysone carboxylic acid from mdpG. The atrochrysone carboxylic acid is then converted to atrochrysone which is further transformed into emodin anthrone. The next step is performed by the anthrone oxygenase mdpH that catalyzes the oxidation of emodinanthrone to emodin. Emodin is further modified to yield monodictyphenone via several steps involving mdpB, mdpC mdpJ, mdpK and mdpL. These enzymes with xptA, xptB and xptC are also proposed to be involved in the synthesis of shamixanthone from emodin. Especially, direct reduction of emodin by the short chain dehydrogenase mdpC followed by dehydration catalyzed by the scytalone dehydratase-like protein mdpB gives loss of oxygen and formation of chrysophanol intermediate in two simple steps. This Emericella nidulans (strain FGSC A4 / ATCC 38163 / CBS 112.46 / NRRL 194 / M139) (Aspergillus nidulans) protein is Scytalone dehydratase-like protein mdpB.